The following is a 420-amino-acid chain: 3-phosphoshikimate 1-carboxyvinyltransferase (420 aa).

3-phosphoshikimate-binding residues include Lys20, Ser21, and Arg25. Residue Lys20 participates in phosphoenolpyruvate binding. Residue Arg119 coordinates phosphoenolpyruvate. 3-phosphoshikimate contacts are provided by Ser161, Ser162, Gln163, Ser189, Asp303, Gln326, and Lys330. Gln163 lines the phosphoenolpyruvate pocket. Asp303 functions as the Proton acceptor in the catalytic mechanism. 3 residues coordinate phosphoenolpyruvate: Arg334, Arg375, and Lys400.

The protein belongs to the EPSP synthase family. Monomer.

It is found in the cytoplasm. It catalyses the reaction 3-phosphoshikimate + phosphoenolpyruvate = 5-O-(1-carboxyvinyl)-3-phosphoshikimate + phosphate. The protein operates within metabolic intermediate biosynthesis; chorismate biosynthesis; chorismate from D-erythrose 4-phosphate and phosphoenolpyruvate: step 6/7. In terms of biological role, catalyzes the transfer of the enolpyruvyl moiety of phosphoenolpyruvate (PEP) to the 5-hydroxyl of shikimate-3-phosphate (S3P) to produce enolpyruvyl shikimate-3-phosphate and inorganic phosphate. The chain is 3-phosphoshikimate 1-carboxyvinyltransferase from Dehalococcoides mccartyi (strain ATCC BAA-2266 / KCTC 15142 / 195) (Dehalococcoides ethenogenes (strain 195)).